The sequence spans 173 residues: Shikimate kinase (173 aa).

14–19 (GAGKST) is an ATP binding site. A Mg(2+)-binding site is contributed by Ser-18. Substrate contacts are provided by Asp-36, Arg-60, and Gly-82. Arg-120 lines the ATP pocket. Arg-139 lines the substrate pocket. Residue Gln-156 participates in ATP binding.

This sequence belongs to the shikimate kinase family. As to quaternary structure, monomer. Requires Mg(2+) as cofactor.

The protein resides in the cytoplasm. It carries out the reaction shikimate + ATP = 3-phosphoshikimate + ADP + H(+). It functions in the pathway metabolic intermediate biosynthesis; chorismate biosynthesis; chorismate from D-erythrose 4-phosphate and phosphoenolpyruvate: step 5/7. In terms of biological role, catalyzes the specific phosphorylation of the 3-hydroxyl group of shikimic acid using ATP as a cosubstrate. In Actinobacillus pleuropneumoniae serotype 5b (strain L20), this protein is Shikimate kinase.